The primary structure comprises 208 residues: Small ribosomal subunit protein uS4 (208 aa).

Positions 99–165 (RRLDNVVFQL…PRLKEILSSL (67 aa)) constitute an S4 RNA-binding domain.

This sequence belongs to the universal ribosomal protein uS4 family. In terms of assembly, part of the 30S ribosomal subunit. Contacts protein S5. The interaction surface between S4 and S5 is involved in control of translational fidelity.

Functionally, one of the primary rRNA binding proteins, it binds directly to 16S rRNA where it nucleates assembly of the body of the 30S subunit. With S5 and S12 plays an important role in translational accuracy. The protein is Small ribosomal subunit protein uS4 of Desulfitobacterium hafniense (strain Y51).